The primary structure comprises 660 residues: WD repeat-containing protein 48 homolog (660 aa).

WD repeat units follow at residues 23 to 78 (MHRS…RDLH), 84 to 120 (HHTD…CMST), 123 to 162 (THRD…KLTA), 174 to 213 (GNKD…KLMK), 216 to 255 (GHTD…CISS), 258 to 297 (CHSE…TAQL), 300 to 341 (IEDA…ISVE), and 362 to 401 (PGAA…KVCD).

The protein belongs to the WD repeat WDR48 family.

Regulator of deubiquitinating complexes. Activates deubiquitination by increasing the catalytic turnover without increasing the affinity of deubiquitinating enzymes for the substrate. The protein is WD repeat-containing protein 48 homolog of Brugia malayi (Filarial nematode worm).